The chain runs to 76 residues: Serine proteinase inhibitor IA-1 (76 aa).

Position 1 is an N-acetylserine (Ser-1).

The protein belongs to the protease inhibitor I9 family.

Its function is as follows. Specifically inhibits an endogenous intracellular serine proteinase (proteinase A). The polypeptide is Serine proteinase inhibitor IA-1 (Pleurotus ostreatus (Oyster mushroom)).